Here is a 144-residue protein sequence, read N- to C-terminus: Maximins 10/H3 (144 aa).

Residues 1-18 form the signal peptide; sequence MNFKYIVAVSFLIASAYA. Residues 19–43 constitute a propeptide that is removed on maturation; sequence RSVKNDEQSLSQRDVLDEESLREFR. Ser-70 is modified (serine amide). Positions 74–123 are excised as a propeptide; the sequence is TAEDHEVMKRLEAVMRDLDSLDYPEEATERETRGFNQEEIANLFTKKEKR. Ile-143 carries the isoleucine amide modification.

This sequence belongs to the bombinin family. In terms of tissue distribution, expressed by the skin glands.

The protein localises to the secreted. Functionally, maximin-10 shows antimicrobial activity against bacteria and against the fungus C.albicans. It has little hemolytic activity. In terms of biological role, maximin-H3 shows antibacterial activity against both Gram-positive and Gram-negative bacteria. It also shows antimicrobial activity against the fungus C.albicans. Shows strong hemolytic activity. The polypeptide is Maximins 10/H3 (Bombina maxima (Giant fire-bellied toad)).